Consider the following 238-residue polypeptide: MLVIPAIDLMGGEAVRLEKGDFATKTVYARHPAEKAEEFARAGATLLHVVDLDGAKAGWPVNLDAVRAICEVPGIEVELGGGLRSLPDIEKVLALGVRYVVLGTAAVERLGLVEQACQRFPGQVRAGIDARNGEVKIAGWLEGTGLAAVDVARKVKGAGVGLVEYTDVARDGMFTGVDAAGAARIQAEAGIPVVASGGVASLDDVTACRAAGLAGVIVGKALYERRIDLAAAIRAAAA.

Aspartate 8 acts as the Proton acceptor in catalysis. The active-site Proton donor is aspartate 129.

This sequence belongs to the HisA/HisF family.

The protein localises to the cytoplasm. It carries out the reaction 1-(5-phospho-beta-D-ribosyl)-5-[(5-phospho-beta-D-ribosylamino)methylideneamino]imidazole-4-carboxamide = 5-[(5-phospho-1-deoxy-D-ribulos-1-ylimino)methylamino]-1-(5-phospho-beta-D-ribosyl)imidazole-4-carboxamide. The protein operates within amino-acid biosynthesis; L-histidine biosynthesis; L-histidine from 5-phospho-alpha-D-ribose 1-diphosphate: step 4/9. The protein is 1-(5-phosphoribosyl)-5-[(5-phosphoribosylamino)methylideneamino] imidazole-4-carboxamide isomerase of Anaeromyxobacter sp. (strain Fw109-5).